Reading from the N-terminus, the 65-residue chain is Muscarinic toxin-like protein 3 (65 aa).

4 disulfides stabilise this stretch: Cys-3-Cys-24, Cys-17-Cys-41, Cys-45-Cys-57, and Cys-58-Cys-63.

In terms of assembly, homodimer; non-covalently linked. In terms of tissue distribution, expressed by the venom gland.

It localises to the secreted. Its function is as follows. Antagonist of muscle and neuronal nicotinic acetylcholine receptors (nAChR) with highest affinity for neuronal alpha-7/CHRNA7 nAChRs. The polypeptide is Muscarinic toxin-like protein 3 (Naja kaouthia (Monocled cobra)).